Consider the following 543-residue polypeptide: Sodium-dependent lysophosphatidylcholine symporter 1 (543 aa).

A compositionally biased stretch (low complexity) spans 1–14 (MAKGEGAESGSAAG). The tract at residues 1-34 (MAKGEGAESGSAAGLLPTSILQSTERPAQVKKEP) is disordered. At 1–40 (MAKGEGAESGSAAGLLPTSILQSTERPAQVKKEPKKKKQQ) the chain is on the cytoplasmic side. The chain crosses the membrane as a helical span at residues 41 to 70 (LSVCNKLCYALGGAPYQVTGCALGFFLQIY). The Extracellular segment spans residues 71 to 94 (LLDVAQKDEEVVFCFSSFQVGPFS). Residues 95–115 (ASIILFVGRAWDAITDPLVGL) traverse the membrane as a helical segment. The Cytoplasmic segment spans residues 116–127 (CISKSPWTCLGR). The helical transmembrane segment at 128-147 (LMPWIIFSTPLAVIAYFLIW) threads the bilayer. Topologically, residues 148 to 157 (FVPDFPHGQT) are extracellular. The chain crosses the membrane as a helical span at residues 158-182 (YWYLLFYCLFETMVTCFHVPYSALT). Over 183–189 (MFISTEQ) the chain is Cytoplasmic. The chain crosses the membrane as a helical span at residues 190–221 (TERDSATAYRMTVEVLGTVLGTAIQGQIVGQA). Topologically, residues 222–241 (DTPCFQDLNSSTVASQSANH) are extracellular. A disulfide bridge connects residues Cys-225 and Cys-473. Residues Asn-230 and Asn-240 are each glycosylated (N-linked (GlcNAc...) asparagine). Residues 242–275 (THGTTSHRETQKAYLLAAGVIVCIYIICAVILIL) traverse the membrane as a helical segment. Residues 276–306 (GVREQREPYEAQQSEPIAYFRGLRLVMSHGP) lie on the Cytoplasmic side of the membrane. A helical transmembrane segment spans residues 307-333 (YIKLITGFLFTSLAFMLVEGNFVLFCT). Over 334 to 344 (YTLGFRNEFQN) the chain is Extracellular. A helical membrane pass occupies residues 345 to 363 (LLLAIMLSATLTIPIWQWF). Over 364–367 (LTRF) the chain is Cytoplasmic. Residues 368–389 (GKKTAVYVGISSAVPFLILVAL) traverse the membrane as a helical segment. Residues 390 to 392 (MES) are Extracellular-facing. A helical transmembrane segment spans residues 393–429 (NLIITYAVAVAAGISVAAAFLLPWSMLPDVIDDFHLK). The Cytoplasmic portion of the chain corresponds to 430-439 (QPHFHGTEPI). Residues 440 to 466 (FFSFYVFFTKFASGVSLGISTLSLDFA) form a helical membrane-spanning segment. Over 467–478 (GYQTRGCSQPER) the chain is Extracellular. The chain crosses the membrane as a helical span at residues 479-502 (VKFTLNMLVTMAPIVLILLGLLLF). The Cytoplasmic segment spans residues 503-543 (KMYPIDEERRRQNKKALQALRDEASSSGCSETDSTELASIL).

The protein belongs to the major facilitator superfamily. Interacts with ERVFRD-1/syncytin-2. As to expression, in placenta, associated with trophoblast cells.

The protein resides in the cell membrane. It localises to the endoplasmic reticulum membrane. It carries out the reaction a 1-acyl-sn-glycero-3-phosphocholine(in) + Na(+)(in) = a 1-acyl-sn-glycero-3-phosphocholine(out) + Na(+)(out). The enzyme catalyses 1-(4Z,7Z,10Z,13Z,16Z,19Z-docosahexaenoyl)-sn-glycero-3-phosphocholine(in) + Na(+)(in) = 1-(4Z,7Z,10Z,13Z,16Z,19Z-docosahexaenoyl)-sn-glycero-3-phosphocholine(out) + Na(+)(out). The catalysed reaction is 1-(9Z-octadecenoyl)-sn-glycero-3-phosphocholine(in) + Na(+)(in) = 1-(9Z-octadecenoyl)-sn-glycero-3-phosphocholine(out) + Na(+)(out). It catalyses the reaction 1-hexadecanoyl-sn-glycero-3-phosphocholine(in) + Na(+)(in) = 1-hexadecanoyl-sn-glycero-3-phosphocholine(out) + Na(+)(out). It carries out the reaction a 1-acyl-sn-glycero-3-phosphoethanolamine(in) + Na(+)(in) = a 1-acyl-sn-glycero-3-phosphoethanolamine(out) + Na(+)(out). Its function is as follows. Sodium-dependent lysophosphatidylcholine (LPC) symporter, which plays an essential role for blood-brain barrier formation and function. Specifically expressed in endothelium of the blood-brain barrier of micro-vessels and transports LPC into the brain. Transport of LPC is essential because it constitutes the major mechanism by which docosahexaenoic acid (DHA), an omega-3 fatty acid that is essential for normal brain growth and cognitive function, enters the brain. Transports LPC carrying long-chain fatty acids such LPC oleate and LPC palmitate with a minimum acyl chain length of 14 carbons. Does not transport docosahexaenoic acid in unesterified fatty acid. Specifically required for blood-brain barrier formation and function, probably by mediating lipid transport. Not required for central nervous system vascular morphogenesis. Acts as a transporter for tunicamycin, an inhibitor of asparagine-linked glycosylation. In placenta, acts as a receptor for ERVFRD-1/syncytin-2 and is required for trophoblast fusion. This Homo sapiens (Human) protein is Sodium-dependent lysophosphatidylcholine symporter 1.